The following is a 141-amino-acid chain: Perlwapin-like protein (141 aa).

Residues Met1–Cys19 form the signal peptide. One can recognise a WAP domain in the interval Lys23–Val71. Disulfide bonds link Cys30–Cys60, Cys39–Cys64, Cys47–Cys59, Cys53–Cys68, Cys81–Cys105, and Cys92–Cys104.

Component of the organic matrix of calcified shell layers like nacre and prisms.

Its subcellular location is the secreted. In Mytilus galloprovincialis (Mediterranean mussel), this protein is Perlwapin-like protein.